Consider the following 168-residue polypeptide: Photosystem I assembly protein Ycf3 (168 aa).

TPR repeat units follow at residues 35–68 (AFTY…EMDP), 72–105 (SYIL…NPFL), and 120–153 (GEQA…TPGN).

Belongs to the Ycf3 family.

It is found in the plastid. It localises to the chloroplast thylakoid membrane. Essential for the assembly of the photosystem I (PSI) complex. May act as a chaperone-like factor to guide the assembly of the PSI subunits. The protein is Photosystem I assembly protein Ycf3 of Pelargonium hortorum (Common geranium).